The chain runs to 455 residues: MSPLECSECFGDQLLHRTYTWHLTLHSRPNFTRKRDTRSESLEIPINVVLPQRGTAEPFLRLHNLYPTPRCARQAALPRLSRRVVSQHSYPLNRFSSVPLDPMERPTSQADLELDYNPPRVQLSDEMFVFQDGRWVSENCRLQSPYFSPSSSFHHKLHHKRLAKECLLQENKTLREENRALREENRMLRKENKILQVFWEEHQAALGRDDSRASSPLLHKDNASSLEAMKKETALQAHRGRENSTLQLLREENRALQQLLEQRKAYWAQPDEKAASTEEIKPISSPHEEPHGLLPDPGPGLPSPFEEPKGLPAPPDDSKTLRALREMVSTLSAQPGEEVGKGGPGLPDGSQSLELLREMNQALQALREENQSLQVLRDENRLLQEENRALHALREEHRLFQEENKALWENNKLKLQQKLVIDTVTEVTARMEMLIEELYAFMPAKSKDPKKPSRV.

A phosphoserine mark is found at S41, S86, S89, S97, S124, S144, S148, and S150. The stretch at 160-197 (KRLAKECLLQENKTLREENRALREENRMLRKENKILQV) forms a coiled coil. Phosphoserine occurs at positions 211 and 225. Positions 240–266 (GRENSTLQLLREENRALQQLLEQRKAY) form a coiled coil. The disordered stretch occupies residues 267-318 (WAQPDEKAASTEEIKPISSPHEEPHGLLPDPGPGLPSPFEEPKGLPAPPDDS). Residues 270–291 (PDEKAASTEEIKPISSPHEEPH) are compositionally biased toward basic and acidic residues. Residues S276 and S332 each carry the phosphoserine modification. Residues 350–421 (SQSLELLREM…KLKLQQKLVI (72 aa)) adopt a coiled-coil conformation.

This sequence belongs to the chibby family. SPERT subfamily. In terms of assembly, homodimer. Binds to NEK1.

This is Protein chibby homolog 2 (CBY2) from Bos taurus (Bovine).